Consider the following 702-residue polypeptide: Cytolytic toxin-alpha (702 aa).

Residues 2–265 (SSDIIMAGLG…KADLLVRDIS (264 aa)) are structural MACPF/CDC pore-forming domain. N-linked (GlcNAc...) asparagine glycosylation is found at N93, N100, N201, N287, and N311. The interval 266–385 (QGLVRKVHSI…DIIEETKHKA (120 aa)) is structural FAT domain. Positions 386-513 (VLSQSQMVKD…PIISAVEKIV (128 aa)) are thioredoxin (THX) domain. A B30.2/SPRY domain is found at 505-702 (IISAVEKIVD…RPYHGTVRLL (198 aa)). N530 is a glycosylation site (N-linked (GlcNAc...) asparagine).

This sequence belongs to the SNTX/VTX toxin family. As to quaternary structure, heterodimer of alpha and beta subunits; non-covalently linked. Also associates into tetramers or even higher aggregates. In terms of processing, intrachain disulfide bonds may be present in the heterodimer. Expressed by the venom gland.

The protein localises to the secreted. Its function is as follows. This heterodimer induces potent hemolytic activities (when tested on rabbit erythrocytes, EC(50)=25-56 ng/mL) due to its ability to form pores in the cell membrane. The pore may be composed of 10 alpha/beta heterodimers. The toxin shows cardiovascular effects that include a vasorelaxant action that may involve the L-arginine-nitric oxid synthase pathway. In addition, it displays edema-inducing activities, increases vascular permeability. It also shows myotoxic activities and interferes irreversibly with neuromuscular function. It also induces irreversible platelet aggregation in rabbit or rat (but not in human or mouse) whole blood. In addition, it has been observed to increase spontaneous quantal acetylcholine release from isolated frog cutaneous pectoris motor endings. The protein is Cytolytic toxin-alpha of Scorpaena plumieri (Spotted scorpionfish).